A 303-amino-acid chain; its full sequence is Thioesterase poxG (303 aa).

Belongs to the lcsJ thioesterase family.

Its pathway is secondary metabolite biosynthesis. In terms of biological role, thioesterase; part of the gene cluster that mediates the biosynthesis of oxaleimides, cytotoxic compounds containing an unusual disubstituted succinimide moiety. The first step of the pathway is provided by the HR-PKS poxF that serves in a new mode of collaborative biosynthesis with the PKS-NRPS poxE, by providing the olefin containing amino acid substrate via the synthesis of an ACP-bound dec-4-enoate. The cytochrome P450 monooxygenase poxM-catalyzed oxidation at the alpha-position creates the enzyme-bound 2-hydroxydec-4-enoyl-ACP thioester, which may be prone to spontaneous hydrolysis to yield 2-hydroxydec-4-enoic acid due to increased electrophilicity of the carbonyl. 2-hydroxydec-4-enoic acid can then be further oxidized by poxM to yield the alpha-ketoacid 2-oxodec-4-enoicacid, which is reductively aminated by the aminotransferase poxL to yield (S,E)-2-aminodec-4-enoic acid. The Hybrid PKS-NRPS synthetase poxE then performs condensation between the octaketide product of its PKS modules and the amino group of (S,E)-2-aminodec-4-enoic acid which is activated and incorporated by the adenylation domain. The resulting aminoacyl product can be cyclized by the Diels-Alderase PoxQ and reductively released by the reductive (R) domain of poxE to yield an aldehyde intermediate. The released aldehyde is then substrate for a Knoevenagel condensation by the hydrolyase poxO followed by an oxidation at the 5-position of the pyrrolidone ring. The presence of the olefin from the amino acid building block allows for migration of the substituted allyl group to occur. This allylic transposition reaction takes place in a conjugate addition, semipinacol-like fashion to yield a succinimide intermediate. Iterative two-electron oxidations of the C7 methyl of the succinimide intermediate to the carboxylic acid can be catalyzed by one of two remaining cytochrome P450 monooxygenasess poxC or poxD to yield oxaleimide A. Subsequent oxidation yields the maleimide scaffold oxaleimide I. Both oxaleimide A and oxaleimide I can undergo oxidative modifications in the decalin ring to yield the series of products oxaleimides B to H. The protein is Thioesterase poxG of Penicillium oxalicum.